We begin with the raw amino-acid sequence, 178 residues long: CDP-archaeol synthase (178 aa).

The next 5 helical transmembrane spans lie at 3–23, 56–76, 91–111, 131–151, and 152–172; these read LLLL…ANAV, FFGI…VILY, IILS…GSFI, FIIF…NIIV, and LLLV…YKLH.

This sequence belongs to the CDP-archaeol synthase family. It depends on Mg(2+) as a cofactor.

It is found in the cell membrane. The enzyme catalyses 2,3-bis-O-(geranylgeranyl)-sn-glycerol 1-phosphate + CTP + H(+) = CDP-2,3-bis-O-(geranylgeranyl)-sn-glycerol + diphosphate. Its pathway is membrane lipid metabolism; glycerophospholipid metabolism. In terms of biological role, catalyzes the formation of CDP-2,3-bis-(O-geranylgeranyl)-sn-glycerol (CDP-archaeol) from 2,3-bis-(O-geranylgeranyl)-sn-glycerol 1-phosphate (DGGGP) and CTP. This reaction is the third ether-bond-formation step in the biosynthesis of archaeal membrane lipids. This chain is CDP-archaeol synthase, found in Methanococcus maripaludis (strain DSM 14266 / JCM 13030 / NBRC 101832 / S2 / LL).